A 77-amino-acid polypeptide reads, in one-letter code: Putative antitoxin VapB3 (77 aa).

Positions 10–60 (RRGLKKELEELGINYAEAVRKFLEELVARERRRRALERARALREELRKKGA) form a coiled coil.

In terms of assembly, forms a complex with putative toxin VapC3, possibly VapB(2)-VapC(2).

Its function is as follows. Antitoxin component of a type II toxin-antitoxin (TA) system. In Pyrobaculum aerophilum (strain ATCC 51768 / DSM 7523 / JCM 9630 / CIP 104966 / NBRC 100827 / IM2), this protein is Putative antitoxin VapB3 (vAPb3).